An 817-amino-acid chain; its full sequence is B lymphocyte-induced maturation protein 1 homolog (817 aa).

The disordered stretch occupies residues 1–62 (MGQGSGDDGV…PAGVSASGAR (62 aa)). The span at 15–61 (FSSAAAAAHSPPHSPLSVGVSSASSATSSSSTPPSSTSPAGVSASGA) shows a compositional bias: low complexity. The SET domain occupies 103–241 (MNLILKSSSK…ANTELSFWFS (139 aa)). 4 consecutive C2H2-type zinc fingers follow at residues 508–530 (YACK…VRTH), 536–558 (FKCE…HLVH), 564–586 (HRCD…LRLH), and 592–614 (YTCD…KRLH). The segment at 620–642 (YSCGTCGKKYISPSGLRTHWKTT) adopts a C2H2-type 5; degenerate zinc-finger fold. A disordered region spans residues 709 to 817 (LLGQGPSGMQ…LPSLGLPHYP (109 aa)). A compositionally biased stretch (low complexity) spans 779–794 (QGGPSSGSGQQQHPQH).

In terms of assembly, interacts with dre-1; the interaction targets blmp-1 for proteasomal degradation. Interacts with ldb-1 and ham-3. Ubiquitinated by the SCF(dre-1) complex, leading to its degradation by the proteasome. In terms of tissue distribution, expressed in hypodermal, vulval, intestinal and distal tip cells.

It localises to the nucleus. The protein resides in the cytoplasm. In terms of biological role, transcription factor which binds to enhancer elements in the promoter region of genes. Regulates the expression of the transcription factor bed-3 to control vulval development. Promotes terminal differentiation in the hypodermis and is involved in regulation of gonadal outgrowth and entry into the dauer stage. Regulates the timing of dorsalward migration of the distal tip cells of the hermaphrodite gonad by inhibiting precocious unc-5 and lin-29 expression which in turn prevents early dorsalward turning. Plays a role in male tail tip morphogenesis. The chain is B lymphocyte-induced maturation protein 1 homolog from Caenorhabditis elegans.